We begin with the raw amino-acid sequence, 487 residues long: Serine/threonine-protein kinase 4 (487 aa).

The residue at position 1 (methionine 1) is an N-acetylmethionine. Threonine 3 carries the phosphothreonine modification. The Protein kinase domain occupies 30–281; it reads FDVLEKLGEG…ATQLLQHPFV (252 aa). Residues 36-44 and lysine 59 contribute to the ATP site; that span reads LGEGSYGSV. Aspartate 149 acts as the Proton acceptor in catalysis. Position 183 is a phosphothreonine; by autocatalysis (threonine 183). Serine 265 is subject to Phosphoserine. Residues 289–311 are a coiled coil; that stretch reads ILRDLINEAMDVKLKRQEAQQRE. The interval 305 to 334 is disordered; sequence QEAQQREVDQDDEENSEEDEMDSGTMVRAA. Acidic residues predominate over residues 313 to 326; that stretch reads DQDDEENSEEDEMD. The residue at position 320 (serine 320) is a Phosphoserine. Phosphothreonine is present on residues threonine 340 and threonine 367. At threonine 387 the chain carries Phosphothreonine; by PKB/AKT1. Serine 410 carries the post-translational modification Phosphoserine. Position 433 is a phosphotyrosine (tyrosine 433). Positions 433-480 constitute an SARAH domain; it reads YEFLKSWTVEDLQKRLLALDPMMEQEMEEIRQKYRSKRQPILDAIEAK.

The protein belongs to the protein kinase superfamily. STE Ser/Thr protein kinase family. STE20 subfamily. In terms of assembly, homodimer; mediated via the coiled-coil region. Interacts with NORE1, which inhibits autoactivation. Interacts with and stabilizes SAV1. Interacts with RASSF1. Interacts with FOXO3. Interacts with RASSF2 (via SARAH domain). Interacts with AR, PKB/AKT1, TNNI3 and SIRT1. Interacts with MARK3 and SCRIB in the presence of DLG5. Interacts with DLG5 (via PDZ domain 3). The cofactor is Mg(2+). In terms of processing, autophosphorylated on serine and threonine residues. Phosphorylation at Thr-387 by PKB/AKT1, leads to inhibition of its: kinase activity, nuclear translocation and autophosphorylation at Thr-183. It also diminishes its cleavage by caspases and its ability to phosphorylate FOXO3. Proteolytically cleaved by caspase-3 during apoptosis at Asp-326 resulting in a 37 kDa form. Proteolytic cleavage results in kinase activation and nuclear translocation of the truncated form (MST1/N).

It is found in the cytoplasm. Its subcellular location is the nucleus. The enzyme catalyses L-seryl-[protein] + ATP = O-phospho-L-seryl-[protein] + ADP + H(+). It catalyses the reaction L-threonyl-[protein] + ATP = O-phospho-L-threonyl-[protein] + ADP + H(+). Its activity is regulated as follows. Inhibited by the C-terminal non-catalytic region. Activated by caspase-cleavage. Full activation also requires homodimerization and autophosphorylation of Thr-183. Activated by RASSF1 which acts by preventing its dephosphorylation. Stress-activated, pro-apoptotic kinase which, following caspase-cleavage, enters the nucleus and induces chromatin condensation followed by internucleosomal DNA fragmentation. Key component of the Hippo signaling pathway which plays a pivotal role in organ size control and tumor suppression by restricting proliferation and promoting apoptosis. The core of this pathway is composed of a kinase cascade wherein STK3/MST2 and STK4/MST1, in complex with its regulatory protein SAV1, phosphorylates and activates LATS1/2 in complex with its regulatory protein MOB1, which in turn phosphorylates and inactivates YAP1 oncoprotein and WWTR1/TAZ. Phosphorylation of YAP1 by LATS2 inhibits its translocation into the nucleus to regulate cellular genes important for cell proliferation, cell death, and cell migration. STK3/MST2 and STK4/MST1 are required to repress proliferation of mature hepatocytes, to prevent activation of facultative adult liver stem cells (oval cells), and to inhibit tumor formation. Phosphorylates 'Ser-14' of histone H2B (H2BS14ph) during apoptosis. Phosphorylates FOXO3 upon oxidative stress, which results in its nuclear translocation and cell death initiation. Phosphorylates MOBKL1A, MOBKL1B and RASSF2. Phosphorylates TNNI3 (cardiac Tn-I) and alters its binding affinity to TNNC1 (cardiac Tn-C) and TNNT2 (cardiac Tn-T). Phosphorylates FOXO1 on 'Ser-212' and regulates its activation and stimulates transcription of PMAIP1 in a FOXO1-dependent manner. Phosphorylates SIRT1 and inhibits SIRT1-mediated p53/TP53 deacetylation, thereby promoting p53/TP53 dependent transcription and apoptosis upon DNA damage. Acts as an inhibitor of PKB/AKT1. Phosphorylates AR on 'Ser-650' and suppresses its activity by intersecting with PKB/AKT1 signaling and antagonizing formation of AR-chromatin complexes. The sequence is that of Serine/threonine-protein kinase 4 (Stk4) from Mus musculus (Mouse).